We begin with the raw amino-acid sequence, 301 residues long: Protoheme IX farnesyltransferase (301 aa).

Transmembrane regions (helical) follow at residues 16–36 (VVALIVFTALVGMFLAIPGMP), 41–61 (IQSGALGFLGIWLAAAAAAAI), 93–113 (VFAGVLITLSMTILTLWVNLI), 114–134 (TAVLTFTSLIGYAVIYTVYLK), 141–161 (IVIGGLAGAMPPMLGWAAVTG), 172–192 (SLLVAIIFVWTPPHFWALAIF), 217–237 (QILLYTVILSVVTLLPVATGM), 238–258 (SGVFYLGAALVLDAVFLWYAW), and 273–293 (FGYSIVYLMALFAFLMFDHWL).

It belongs to the UbiA prenyltransferase family. Protoheme IX farnesyltransferase subfamily.

The protein localises to the cell inner membrane. It carries out the reaction heme b + (2E,6E)-farnesyl diphosphate + H2O = Fe(II)-heme o + diphosphate. It functions in the pathway porphyrin-containing compound metabolism; heme O biosynthesis; heme O from protoheme: step 1/1. Functionally, converts heme B (protoheme IX) to heme O by substitution of the vinyl group on carbon 2 of heme B porphyrin ring with a hydroxyethyl farnesyl side group. This Xylella fastidiosa (strain Temecula1 / ATCC 700964) protein is Protoheme IX farnesyltransferase.